The chain runs to 436 residues: Glutamyl-tRNA reductase 2 (436 aa).

Residues 49-52 (TCNR), serine 106, 111-113 (EPQ), and glutamine 117 contribute to the substrate site. The active-site Nucleophile is the cysteine 50. An NADP(+)-binding site is contributed by 186-191 (GAGKMC).

Belongs to the glutamyl-tRNA reductase family. In terms of assembly, homodimer.

The enzyme catalyses (S)-4-amino-5-oxopentanoate + tRNA(Glu) + NADP(+) = L-glutamyl-tRNA(Glu) + NADPH + H(+). It functions in the pathway porphyrin-containing compound metabolism; protoporphyrin-IX biosynthesis; 5-aminolevulinate from L-glutamyl-tRNA(Glu): step 1/2. Functionally, catalyzes the NADPH-dependent reduction of glutamyl-tRNA(Glu) to glutamate 1-semialdehyde (GSA). In Koribacter versatilis (strain Ellin345), this protein is Glutamyl-tRNA reductase 2.